A 487-amino-acid polypeptide reads, in one-letter code: MNTQQLAKLRSFVPEMRKVRHIHFVGIGGAGMGGIAEVLANEGYAISGSDLAPNVVTQQLVALGATIYFNHRPENIRDASVVVVSTAISADNPEIIAAREARIPVIRRAEMLAELMRYRHGVAIAGTHGKTTTTAMISNIYAQAGLDPTFVNGGLVKSAGTHARLGCSRYLIAEADESDASFLHLQPMVAVVTNIEADHMDTYHGNFDNLKETFITFLHNLPFYGRAVMCIDDDVIRSIIPKVGRYITTYGFSEDADVRITHYEQKGAQGFFTISREDMPDLDVVLNAPGRHNALNATAAVAVATEEGIADEHILAALLNFQGTGRRFDFLGNFSLEHVNGQEGEVMLVDDYGHHPTEVDATIKAARAGWPDKRLVMLFQPHRYTRTRDLYEDFATVLNQVDILLLTDVYAAGEAPIPGADSRSLCRTIRQRGKLDPIWVSDVENISSILAGVLTDNDLVLVQGAGNIGKIARRLAETKLQPSLSED.

126 to 132 (GTHGKTT) serves as a coordination point for ATP.

The protein belongs to the MurCDEF family.

The protein localises to the cytoplasm. It carries out the reaction UDP-N-acetyl-alpha-D-muramate + L-alanine + ATP = UDP-N-acetyl-alpha-D-muramoyl-L-alanine + ADP + phosphate + H(+). The protein operates within cell wall biogenesis; peptidoglycan biosynthesis. Functionally, cell wall formation. This chain is UDP-N-acetylmuramate--L-alanine ligase, found in Proteus mirabilis (strain HI4320).